Reading from the N-terminus, the 545-residue chain is Thermosome subunit beta (545 aa).

The protein belongs to the TCP-1 chaperonin family. As to quaternary structure, forms a Heterooligomeric complex of two stacked eight-membered rings.

Its function is as follows. Molecular chaperone; binds unfolded polypeptides in vitro, and has a weak ATPase activity. This Archaeoglobus fulgidus (strain ATCC 49558 / DSM 4304 / JCM 9628 / NBRC 100126 / VC-16) protein is Thermosome subunit beta (thsB).